Consider the following 176-residue polypeptide: Peptide methionine sulfoxide reductase MsrA (176 aa).

Residue C10 is part of the active site.

Belongs to the MsrA Met sulfoxide reductase family.

The catalysed reaction is L-methionyl-[protein] + [thioredoxin]-disulfide + H2O = L-methionyl-(S)-S-oxide-[protein] + [thioredoxin]-dithiol. It catalyses the reaction [thioredoxin]-disulfide + L-methionine + H2O = L-methionine (S)-S-oxide + [thioredoxin]-dithiol. Functionally, has an important function as a repair enzyme for proteins that have been inactivated by oxidation. Catalyzes the reversible oxidation-reduction of methionine sulfoxide in proteins to methionine. This is Peptide methionine sulfoxide reductase MsrA from Chromobacterium violaceum (strain ATCC 12472 / DSM 30191 / JCM 1249 / CCUG 213 / NBRC 12614 / NCIMB 9131 / NCTC 9757 / MK).